The sequence spans 156 residues: Ribosomal RNA large subunit methyltransferase H (156 aa).

Residues leucine 74, glycine 105, and leucine 124–leucine 129 contribute to the S-adenosyl-L-methionine site.

The protein belongs to the RNA methyltransferase RlmH family. As to quaternary structure, homodimer.

The protein localises to the cytoplasm. The catalysed reaction is pseudouridine(1915) in 23S rRNA + S-adenosyl-L-methionine = N(3)-methylpseudouridine(1915) in 23S rRNA + S-adenosyl-L-homocysteine + H(+). Specifically methylates the pseudouridine at position 1915 (m3Psi1915) in 23S rRNA. In Legionella pneumophila (strain Paris), this protein is Ribosomal RNA large subunit methyltransferase H.